Here is a 457-residue protein sequence, read N- to C-terminus: Chromosomal replication initiator protein DnaA (457 aa).

The interval 1-90 is domain I, interacts with DnaA modulators; that stretch reads MDTNNNIEKE…HSVDVRIEVA (90 aa). The segment at 91-112 is domain II; the sequence is PKIQINAQSNINYKAIKTSVKD. A domain III, AAA+ region region spans residues 113-323; sequence SYTFENFVVG…GAIIKISVNA (211 aa). Residues Gly153, Gly155, Lys156, and Thr157 each coordinate ATP. The interval 324–457 is domain IV, binds dsDNA; it reads NLMNASIDLN…DKKTAFNSSE (134 aa).

The protein belongs to the DnaA family. In terms of assembly, oligomerizes as a right-handed, spiral filament on DNA at oriC. Interacts via domain I with HobA. In a crystal with domains I and II of DnaA HobA forms tetramers with DnaA fragments bound at the dimer interface of the tetramer.

It localises to the cytoplasm. Its subcellular location is the cell inner membrane. Functionally, plays an essential role in the initiation and regulation of chromosomal replication. ATP-DnaA binds to the origin of replication (oriC) to initiate formation of the DNA replication initiation complex once per cell cycle. Binds the DnaA box (a 9 base pair repeat at the origin) and separates the double-stranded (ds)DNA. Forms a right-handed helical filament on oriC DNA; dsDNA binds to the exterior of the filament while single-stranded (ss)DNA is stabiized in the filament's interior. The ATP-DnaA-oriC complex binds and stabilizes one strand of the AT-rich DNA unwinding element (DUE), permitting loading of DNA polymerase. After initiation quickly degrades to an ADP-DnaA complex that is not apt for DNA replication. Binds acidic phospholipids. The DnaA box is 5'-TTATC[CA]A[CA]A-3' in this bacterium cycle. Multiple discrete DnaA-oriC complexes can be seen as DnaA levels increase. Binding of DnaA to oriC is increased by HobA; some chi-type structures can be seen by electron microscopy. Strand separation requires the DnaA boxes and adjacent DnaA-trio motifs but works equally well with ADP or ATP. This is Chromosomal replication initiator protein DnaA from Helicobacter pylori (strain ATCC 700392 / 26695) (Campylobacter pylori).